We begin with the raw amino-acid sequence, 491 residues long: Aspartyl/glutamyl-tRNA(Asn/Gln) amidotransferase subunit B (491 aa).

It belongs to the GatB/GatE family. GatB subfamily. Heterotrimer of A, B and C subunits.

It carries out the reaction L-glutamyl-tRNA(Gln) + L-glutamine + ATP + H2O = L-glutaminyl-tRNA(Gln) + L-glutamate + ADP + phosphate + H(+). The catalysed reaction is L-aspartyl-tRNA(Asn) + L-glutamine + ATP + H2O = L-asparaginyl-tRNA(Asn) + L-glutamate + ADP + phosphate + 2 H(+). Functionally, allows the formation of correctly charged Asn-tRNA(Asn) or Gln-tRNA(Gln) through the transamidation of misacylated Asp-tRNA(Asn) or Glu-tRNA(Gln) in organisms which lack either or both of asparaginyl-tRNA or glutaminyl-tRNA synthetases. The reaction takes place in the presence of glutamine and ATP through an activated phospho-Asp-tRNA(Asn) or phospho-Glu-tRNA(Gln). This Burkholderia lata (strain ATCC 17760 / DSM 23089 / LMG 22485 / NCIMB 9086 / R18194 / 383) protein is Aspartyl/glutamyl-tRNA(Asn/Gln) amidotransferase subunit B.